Here is a 396-residue protein sequence, read N- to C-terminus: Digeranylgeranylglycerophospholipid reductase (396 aa).

FAD-binding residues include Gly14, Glu33, Cys44, Gly45, Gly47, Arg100, Ala124, Glu162, Asp283, Gly295, and Ile296. A 2,3-bis-O-(geranylgeranyl)-sn-glycerol 1-phospholipid-binding residues include Lys338 and Val374.

It belongs to the geranylgeranyl reductase family. DGGGPL reductase subfamily. Monomer. FAD is required as a cofactor.

Its subcellular location is the cell membrane. It carries out the reaction 2,3-bis-O-(phytanyl)-sn-glycerol 1-phosphate + 8 NADP(+) = 2,3-bis-O-(geranylgeranyl)-sn-glycerol 1-phosphate + 8 NADPH + 8 H(+). The enzyme catalyses 2,3-bis-O-(phytanyl)-sn-glycerol 1-phosphate + 8 NAD(+) = 2,3-bis-O-(geranylgeranyl)-sn-glycerol 1-phosphate + 8 NADH + 8 H(+). It catalyses the reaction a 2,3-bis-O-phytanyl-sn-glycerol 1-phospholipid + 8 A = a 2,3-bis-O-(geranylgeranyl)-sn-glycerol 1-phospholipid + 8 AH2. The catalysed reaction is CDP-2,3-bis-O-(geranylgeranyl)-sn-glycerol + 8 AH2 = CDP-2,3-bis-O-(phytanyl)-sn-glycerol + 8 A. It carries out the reaction archaetidylserine + 8 AH2 = 2,3-bis-O-phytanyl-sn-glycero-3-phospho-L-serine + 8 A. It functions in the pathway membrane lipid metabolism; glycerophospholipid metabolism. Functionally, is involved in the reduction of 2,3-digeranylgeranylglycerophospholipids (unsaturated archaeols) into 2,3-diphytanylglycerophospholipids (saturated archaeols) in the biosynthesis of archaeal membrane lipids. Catalyzes the formation of archaetidic acid (2,3-di-O-phytanyl-sn-glyceryl phosphate) from 2,3-di-O-geranylgeranylglyceryl phosphate (DGGGP) via the hydrogenation of each double bond of the isoprenoid chains. Can use both NADH and NADPH as electron donors. Also catalyzes the reduction of 2,3-di-O-geranylgeranylglyceryl phosphate analogs such as 2,3-di-O-phytyl-sn-glyceryl phosphate (DPHGP), 3-O-(2,3-di-O-phytyl-sn-glycero-phospho)-sn-glycerol (DPHGPG) and 2,3-di-O-phytyl-sn-glycero-phosphoethanolamine (DPHGPE). Is not active toward 2,3-di-O-geranylgeranylglycerol. Is also probably able to reduce double bonds of geranyl groups in CDP-2,3-bis-O-(geranylgeranyl)-sn-glycerol and archaetidylserine, thus acting at various stages in the biosynthesis of archaeal membrane lipids. The sequence is that of Digeranylgeranylglycerophospholipid reductase from Thermoplasma acidophilum (strain ATCC 25905 / DSM 1728 / JCM 9062 / NBRC 15155 / AMRC-C165).